The sequence spans 241 residues: Demethylmenaquinone methyltransferase (241 aa).

S-adenosyl-L-methionine is bound by residues threonine 60, aspartate 81, and 106 to 107; that span reads DA.

The protein belongs to the class I-like SAM-binding methyltransferase superfamily. MenG/UbiE family.

The catalysed reaction is a 2-demethylmenaquinol + S-adenosyl-L-methionine = a menaquinol + S-adenosyl-L-homocysteine + H(+). The protein operates within quinol/quinone metabolism; menaquinone biosynthesis; menaquinol from 1,4-dihydroxy-2-naphthoate: step 2/2. In terms of biological role, methyltransferase required for the conversion of demethylmenaquinol (DMKH2) to menaquinol (MKH2). The polypeptide is Demethylmenaquinone methyltransferase (Staphylococcus aureus (strain MRSA252)).